The following is a 211-amino-acid chain: Large ribosomal subunit protein uL3 (211 aa).

Residues N122 to P157 form a disordered region.

This sequence belongs to the universal ribosomal protein uL3 family. As to quaternary structure, part of the 50S ribosomal subunit. Forms a cluster with proteins L14 and L19.

One of the primary rRNA binding proteins, it binds directly near the 3'-end of the 23S rRNA, where it nucleates assembly of the 50S subunit. This chain is Large ribosomal subunit protein uL3, found in Trichormus variabilis (strain ATCC 29413 / PCC 7937) (Anabaena variabilis).